The chain runs to 338 residues: Tetraacyldisaccharide 4'-kinase (338 aa).

63-70 (TVGGAGKT) is an ATP binding site.

It belongs to the LpxK family.

It catalyses the reaction a lipid A disaccharide + ATP = a lipid IVA + ADP + H(+). It participates in glycolipid biosynthesis; lipid IV(A) biosynthesis; lipid IV(A) from (3R)-3-hydroxytetradecanoyl-[acyl-carrier-protein] and UDP-N-acetyl-alpha-D-glucosamine: step 6/6. In terms of biological role, transfers the gamma-phosphate of ATP to the 4'-position of a tetraacyldisaccharide 1-phosphate intermediate (termed DS-1-P) to form tetraacyldisaccharide 1,4'-bis-phosphate (lipid IVA). This chain is Tetraacyldisaccharide 4'-kinase, found in Hahella chejuensis (strain KCTC 2396).